The chain runs to 258 residues: Na(+)-translocating NADH-quinone reductase subunit C (258 aa).

Residues 14 to 34 traverse the membrane as a helical segment; the sequence is LIVVLAVSLICSVIVAGAVVG. Ser226 carries the post-translational modification FMN phosphoryl serine.

This sequence belongs to the NqrC family. In terms of assembly, composed of six subunits; NqrA, NqrB, NqrC, NqrD, NqrE and NqrF. FMN serves as cofactor.

The protein localises to the cell inner membrane. The catalysed reaction is a ubiquinone + n Na(+)(in) + NADH + H(+) = a ubiquinol + n Na(+)(out) + NAD(+). Functionally, NQR complex catalyzes the reduction of ubiquinone-1 to ubiquinol by two successive reactions, coupled with the transport of Na(+) ions from the cytoplasm to the periplasm. NqrA to NqrE are probably involved in the second step, the conversion of ubisemiquinone to ubiquinol. The chain is Na(+)-translocating NADH-quinone reductase subunit C from Neisseria meningitidis serogroup A / serotype 4A (strain DSM 15465 / Z2491).